The chain runs to 377 residues: 23S rRNA (uracil(747)-C(5))-methyltransferase RlmC (377 aa).

Residues Cys3, Cys11, Cys14, and Cys87 each contribute to the [4Fe-4S] cluster site. Gln212, Phe241, Glu262, and Asn307 together coordinate S-adenosyl-L-methionine. The Nucleophile role is filled by Cys334.

It belongs to the class I-like SAM-binding methyltransferase superfamily. RNA M5U methyltransferase family. RlmC subfamily.

The catalysed reaction is uridine(747) in 23S rRNA + S-adenosyl-L-methionine = 5-methyluridine(747) in 23S rRNA + S-adenosyl-L-homocysteine + H(+). Functionally, catalyzes the formation of 5-methyl-uridine at position 747 (m5U747) in 23S rRNA. This Edwardsiella ictaluri (strain 93-146) protein is 23S rRNA (uracil(747)-C(5))-methyltransferase RlmC.